The chain runs to 492 residues: Cysteine--tRNA ligase (492 aa).

Cys31 is a Zn(2+) binding site. Residues 33-43 carry the 'HIGH' region motif; sequence PTVYGDPHLGH. The Zn(2+) site is built by Cys226, His251, and Glu255. A 'KMSKS' region motif is present at residues 283 to 287; sequence KMGKS. Residue Lys286 coordinates ATP.

Belongs to the class-I aminoacyl-tRNA synthetase family. In terms of assembly, monomer. The cofactor is Zn(2+).

It localises to the cytoplasm. It catalyses the reaction tRNA(Cys) + L-cysteine + ATP = L-cysteinyl-tRNA(Cys) + AMP + diphosphate. This is Cysteine--tRNA ligase from Azobacteroides pseudotrichonymphae genomovar. CFP2.